We begin with the raw amino-acid sequence, 422 residues long: DNA-directed RNA polymerase III subunit RPC4 (422 aa).

Disordered stretches follow at residues 1-80 (MSSN…GQQR), 115-190 (KSEG…DDEE), 219-244 (IQEA…GTGL), and 318-350 (RPAV…TKDA). The Nuclear localization signal signature appears at 25 to 29 (KPSLK). The segment covering 28–37 (LKFKPKAVAR) has biased composition (basic residues). Basic and acidic residues predominate over residues 38-64 (KSKEEREAAASKVKLEEESKRGNDKKH). 2 positions are modified to phosphoserine: Ser-137 and Ser-138. The segment covering 138–148 (SENEAEDDDNE) has biased composition (acidic residues). Residues 160-170 (MGKEFEARNLI) are compositionally biased toward basic and acidic residues. Ser-178, Ser-182, and Ser-224 each carry phosphoserine. Positions 219–229 (IQEALSEKPTR) are enriched in basic and acidic residues. A phosphothreonine mark is found at Thr-228 and Thr-232.

Belongs to the eukaryotic RPC4/POLR3D RNA polymerase subunit family. In terms of assembly, component of the RNA polymerase III (Pol III) complex consisting of 17 subunits. Interacts with RPC37/RPC5. RPC53/RPC4, RPC37/RPC5 and RPC11/RPC10 probably form a Pol III subcomplex.

It localises to the nucleus. Its function is as follows. DNA-dependent RNA polymerase catalyzes the transcription of DNA into RNA using the four ribonucleoside triphosphates as substrates. Specific peripheric component of RNA polymerase III which synthesizes small RNAs, such as 5S rRNA and tRNAs. Essential for tRNA synthesis. The RPC53/RPC4-RPC37/RPC5 subcomplex is required for terminator recognition and reinitiation. In Saccharomyces cerevisiae (strain ATCC 204508 / S288c) (Baker's yeast), this protein is DNA-directed RNA polymerase III subunit RPC4 (RPC53).